Reading from the N-terminus, the 1002-residue chain is MAKKSKKNQQNYWDEEFEEDAAQNEEISATPTPNPESSAGADDTSREASASAEGAEAIEGDFMSTLKQSKKKQEKKVIEEKKDGKPILKSKKEKEKEKKEKEKQKKKEQAARKKAQQQAQKEKNKELNKQNVEKAAAEKAAAEKSQKSKGESDKPSASAKKPAKKVPAGLAALRRQLELKKQLEEQEKLEREEEERLEKEEEERLANEEKMKEEAKAAKKEKEKAKREKRKAEGKLLTRKQKEEKKLLERRRAALLSSGNVKVAGLAKKDGEENKPKKVVYSKKKKRTTQENASEAIKSDSKKDSEVVPDDELKESEDVLIDDWENLALGDDDEEGTNEETQESTASHENEDQNQGEEEEEGEEEEEEEEERAHVHEVAKSTPAATPAATPTPSSASPNKKDLRSPICCILGHVDTGKTKLLDKIRQTNVQGGEAGGITQQIGATYFPIDAIKAKTKVMAEYEKQTFDVPGLLVIDTPGHESFSNLRSRGSSLCNIAILVIDIMHGLEQQTIESIKLLRDRKAPFVVALNKIDRLYDWKAIPNNSFRDSFAKQSRAVQEEFQSRYSKIQLELAEQGLNSELYFQNKNMSKYVSIVPTSAVTGEGVPDLLWLLLELTQKRMSKQLMYLSHVEATILEVKVVEGFGTTIDVILSNGYLREGDRIVLCGMNGPIVTNIRALLTPQPLRELRLKSEYVHHKEVKAALGVKIAANDLEKAVSGSRLLVVGPEDDEDELMDDVMDDLTGLLDSVDTTGKGVVVQASTLGSLEALLDFLKDMKIPVMSIGLGPVYKRDVMKASTMLEKAPEYAVMLCFDVKVDKEAEQYAEQEGIKIFNADVIYHLFDSFTAYQEKLLEERRKDFLDYAIFPCVLQTLQIINKRGPMIIGVDVLEGTLRVGTPICAVKTDPTTKERQTLILGKVISLEINHQPVQEVKKGQTAAGVAVRLEDPSGQQPIWGRHVDENDTLYSLVSRRSIDTLKDKAFRDQVARSDWLLLKKLKVVFGIE.

Disordered stretches follow at residues 1 to 172 and 184 to 402; these read MAKK…GLAA and EEQE…NKKD. Residues 13 to 23 show a composition bias toward acidic residues; the sequence is WDEEFEEDAAQ. Residues 27–37 are compositionally biased toward polar residues; it reads ISATPTPNPES. Positions 47 to 57 are enriched in low complexity; it reads EASASAEGAEA. 2 stretches are compositionally biased toward basic and acidic residues: residues 75–111 and 120–154; these read KKVI…EQAA and QKEK…ESDK. Residues 155–172 show a composition bias toward low complexity; that stretch reads PSASAKKPAKKVPAGLAA. 2 stretches are compositionally biased toward basic and acidic residues: residues 184–252 and 267–276; these read EEQE…ERRR and AKKDGEENKP. Positions 277–287 are enriched in basic residues; that stretch reads KKVVYSKKKKR. Over residues 297–306 the composition is skewed to basic and acidic residues; it reads IKSDSKKDSE. Acidic residues-rich tracts occupy residues 307-342 and 352-370; these read VVPD…EETQ and DQNQ…EEEE. Positions 381–398 are enriched in low complexity; the sequence is STPAATPAATPTPSSASP. Residues 403–621 form the tr-type G domain; sequence LRSPICCILG…LLELTQKRMS (219 aa). Position 405 is a phosphoserine (S405). The interval 412 to 419 is G1; it reads GHVDTGKT. Residue D415 participates in K(+) binding. Residue D415 coordinates Na(+). GTP contacts are provided by residues 415–420, Q431, and 437–439; these read DTGKTK and GIT. A Mg(2+)-binding site is contributed by T419. Residue G437 coordinates K(+). Na(+) is bound at residue G437. The G2 stretch occupies residues 437-441; that stretch reads GITQQ. Residue T439 coordinates Mg(2+). The tract at residues 476-479 is G3; it reads DTPG. Residues 530 to 533 and 599 to 600 contribute to the GTP site; these read NKID and AV. Residues 530 to 533 are G4; sequence NKID. The interval 598–600 is G5; sequence SAV.

Belongs to the TRAFAC class translation factor GTPase superfamily. Classic translation factor GTPase family. IF-2 subfamily. Na(+) is required as a cofactor. Requires K(+) as cofactor.

Its subcellular location is the cytoplasm. The enzyme catalyses GTP + H2O = GDP + phosphate + H(+). In terms of biological role, plays a role in translation initiation. Translational GTPase that catalyzes the joining of the 40S and 60S subunits to form the 80S initiation complex with the initiator methionine-tRNA in the P-site base paired to the start codon. GTP binding and hydrolysis induces conformational changes in the enzyme that renders it active for productive interactions with the ribosome. The release of the enzyme after formation of the initiation complex is a prerequisite to form elongation-competent ribosomes. Stimulates 20S pre-rRNA cleavage to mature 18S rRNA by PIN-domain endonuclease NOB1. The protein is Eukaryotic translation initiation factor 5B of Saccharomyces cerevisiae (strain ATCC 204508 / S288c) (Baker's yeast).